Reading from the N-terminus, the 693-residue chain is Elongation factor G (693 aa).

The region spanning 8-282 (AKTRNIGIMA…AVIDYLPSPL (275 aa)) is the tr-type G domain. GTP-binding positions include 17-24 (AHVDAGKT), 81-85 (DTPGH), and 135-138 (NKMD).

The protein belongs to the TRAFAC class translation factor GTPase superfamily. Classic translation factor GTPase family. EF-G/EF-2 subfamily.

Its subcellular location is the cytoplasm. Catalyzes the GTP-dependent ribosomal translocation step during translation elongation. During this step, the ribosome changes from the pre-translocational (PRE) to the post-translocational (POST) state as the newly formed A-site-bound peptidyl-tRNA and P-site-bound deacylated tRNA move to the P and E sites, respectively. Catalyzes the coordinated movement of the two tRNA molecules, the mRNA and conformational changes in the ribosome. This chain is Elongation factor G, found in Streptococcus thermophilus (strain CNRZ 1066).